A 100-amino-acid polypeptide reads, in one-letter code: UPF0473 protein LMHCC_1068 (100 aa).

It belongs to the UPF0473 family.

The protein is UPF0473 protein LMHCC_1068 of Listeria monocytogenes serotype 4a (strain HCC23).